We begin with the raw amino-acid sequence, 260 residues long: Indole-3-glycerol phosphate synthase (260 aa).

Belongs to the TrpC family.

It carries out the reaction 1-(2-carboxyphenylamino)-1-deoxy-D-ribulose 5-phosphate + H(+) = (1S,2R)-1-C-(indol-3-yl)glycerol 3-phosphate + CO2 + H2O. It participates in amino-acid biosynthesis; L-tryptophan biosynthesis; L-tryptophan from chorismate: step 4/5. The sequence is that of Indole-3-glycerol phosphate synthase from Staphylococcus aureus (strain Mu3 / ATCC 700698).